A 1175-amino-acid polypeptide reads, in one-letter code: MSEDKSGSFYSMYKLCGQLEKESSHSGKTQLIKSFCNVFKGDLYLLAKLMLCKEDKRVFRIKDKAMLKICSHIWDCDLDDMIEDLDNGDFTETCKKFYIEYGKYPEKSTLTLKEVDQVLDSLTVSGKFEDQVKIINKLLKRCTPFDFRLVCRIIDSDLKINTGAKFFLDAFHPQAYDAFKKANNLKGVIEKIQQHDFDNDNGDGDDGDGDDNDDDDGDGDSDSDKKKKKSSGGSGSDSGSKKKSKSFEVAIKLMTPIKPMLPKAVKTVEGVVKSSECFYAEIKYDGERIQIHKDGNQFSCYSRNLKPLMPWKVDEVKPYIPKSTKAQQMILDGEILLMDTKTSQPLPFGTLSAHKKNGFKDATVCVFLFDILYLNGKSLIHLPLKERREILEKNVMVVKNRIEFSEVTIVNGASEKSKLTALLNRVFKEKLEGLVIKDAMSEYEPGCRHWIKIKKDYIHGMADSADLIAVGGYYGSGSMGGLVTVFLMVCYDKQNKIYKTVVKASGGLDDNMIAKLQPKVTSTMTKISKEVSKIPYWLDCPKQYAPDFIVKDIKQAMIFEIESAEFTKSDHHTTGYSMRFPRILKIRHDKDYKTATTLEELVEIGKDIKIVPVGKGDNNSPTTTTTTTTTTTTTTSSKLIKKQQLSDDDDDNDKDSKQQQQEPSKLKFVSDDLLDPFNDKSDDESNKIFILNYVDNSGIWNEKGLSGAIGKKWPSIPKSFSQGDSNIIKSGEIRVEKVKDDSISTNKKVFICNLSCIIPPKSKKESYTFSLKEFKSAIKEAKGAINQKKASVHLAKPQFTSPSWSELDEVLTKELYNSGIKVFVHSISKSSPTTTSPTTTSPTTTSPKITSPSSSSSPSNKLSPLKRGRDEKLEHEIIKDIEPSLPIFEDVNAVIDSKTIDQVDVKRLINSIKTMGGRVSDKWQQVGIGKTTHLICNGMSDLYLHVDRLGGTIVLPNWVDQCFGSDKLLPLHEDYIYFNKKDHPDYSQSSSSSSMSIEEEKIVVTTTSDDPSEGNQQQQDKKVIKESKIIQSKDHSSTTTIDTKITITSTNNNNNGNDNNKTRKKQHLLSIFQECIIFLHDNVNDRETLKRYIIAYGGDISDSVNDKTTHLVASLPNNFSNVKPKDLFKSIINNNSKNNNNNNNNNNNGIIVNSLWLWDSINMSDLLDVKNYKLF.

Residues 195–243 (HDFDNDNGDGDDGDGDDNDDDDGDGDSDSDKKKKKSSGGSGSDSGSKKK) are disordered. The span at 199–221 (NDNGDGDDGDGDDNDDDDGDGDS) shows a compositional bias: acidic residues. Residue Glu281 coordinates ATP. The active-site N6-AMP-lysine intermediate is Lys283. ATP is bound by residues Arg288 and Arg303. Mg(2+)-binding residues include Glu334 and Glu432. ATP-binding residues include Lys437, Arg448, and Lys452. Disordered stretches follow at residues 612–669 (PVGK…LKFV) and 829–869 (KSSP…KRGR). Composition is skewed to low complexity over residues 622–635 (TTTTTTTTTTTTTT) and 829–859 (KSSPTTTSPTTTSPTTTSPKITSPSSSSSPS). In terms of domain architecture, BRCT 1 spans 883-976 (PSLPIFEDVN…KLLPLHEDYI (94 aa)). The tract at residues 984–1036 (PDYSQSSSSSSMSIEEEKIVVTTTSDDPSEGNQQQQDKKVIKESKIIQSKDHS) is disordered. Positions 987–996 (SQSSSSSSMS) are enriched in low complexity. The segment covering 1004–1018 (VTTTSDDPSEGNQQQ) has biased composition (polar residues). Residues 1019–1036 (QDKKVIKESKIIQSKDHS) show a composition bias toward basic and acidic residues. The BRCT 2 domain maps to 1067-1174 (HLLSIFQECI…DLLDVKNYKL (108 aa)).

It belongs to the ATP-dependent DNA ligase family. Mg(2+) is required as a cofactor.

Its subcellular location is the nucleus. The enzyme catalyses ATP + (deoxyribonucleotide)n-3'-hydroxyl + 5'-phospho-(deoxyribonucleotide)m = (deoxyribonucleotide)n+m + AMP + diphosphate.. In terms of biological role, the alpha isoform interacts with DNA-repair protein XRCC1 and can correct defective DNA strand-break repair and sister chromatid exchange following treatment with ionizing radiation and alkylating agents. The beta isoform does not interact with XRCC1 and may be specifically involved in the completion of homologous recombination events that occur during meiotic prophase. The polypeptide is DNA ligase 3 (lig3) (Dictyostelium discoideum (Social amoeba)).